Reading from the N-terminus, the 2078-residue chain is Autophagy-related protein 2 homolog B (2078 aa).

In terms of domain architecture, Chorein N-terminal spans 13 to 108; that stretch reads ACRYLLQRYL…EMVFRPRPRP (96 aa). Ser255 and Ser379 each carry phosphoserine. The tract at residues 473–495 is disordered; the sequence is GSTFPSNLVHPTPLQKTSLPSRS. Residues 486–495 are compositionally biased toward polar residues; sequence LQKTSLPSRS. Residues Ser497, Ser840, Ser886, Ser899, and Ser1008 each carry the phosphoserine modification. A disordered region spans residues 868–888; that stretch reads EEEENDGHYQEEEEGGAHSLK. The segment covering 873–888 has biased composition (basic and acidic residues); it reads DGHYQEEEEGGAHSLK. Residue Tyr1012 is modified to Phosphotyrosine. Phosphoserine is present on residues Ser1016 and Ser1018. Phosphothreonine is present on Thr1022. The interval 1375–1405 is disordered; the sequence is ADMKPGAFQRRSKVDSSGRSSSRGPVLPEAD. Residue Ser1526 is modified to Phosphoserine.

The protein belongs to the ATG2 family. As to quaternary structure, interacts with WDR45/WIPI4.

It localises to the preautophagosomal structure membrane. It is found in the lipid droplet. Its subcellular location is the endoplasmic reticulum membrane. It catalyses the reaction a 1,2-diacyl-sn-glycero-3-phospho-L-serine(in) = a 1,2-diacyl-sn-glycero-3-phospho-L-serine(out). The enzyme catalyses a 1,2-diacyl-sn-glycero-3-phosphoethanolamine(in) = a 1,2-diacyl-sn-glycero-3-phosphoethanolamine(out). Its function is as follows. Lipid transfer protein required for both autophagosome formation and regulation of lipid droplet morphology and dispersion. Tethers the edge of the isolation membrane (IM) to the endoplasmic reticulum (ER) and mediates direct lipid transfer from ER to IM for IM expansion. Binds to the ER exit site (ERES), which is the membrane source for autophagosome formation, and extracts phospholipids from the membrane source and transfers them to ATG9 (ATG9A or ATG9B) to the IM for membrane expansion. Lipid transfer activity is enhanced by WDR45/WIPI4, which promotes ATG2B-association with phosphatidylinositol 3-monophosphate (PI3P)-containing membranes. The polypeptide is Autophagy-related protein 2 homolog B (Homo sapiens (Human)).